The chain runs to 953 residues: Serine-aspartate repeat-containing protein C (953 aa).

Positions 1 to 50 (MNNKKTATNRKGMIPNRLNKFSIRKYSVGTASILVGTTLIFGLSGHEAKA) are cleaved as a signal peptide. Positions 51–160 (AEHTNGELNQ…AKNVSTTPKT (110 aa)) are disordered. The tract at residues 51 to 495 (AEHTNGELNQ…GSSTANGDQK (445 aa)) is ligand binding A region. Over residues 56–71 (GELNQSKNETTAPSEN) the composition is skewed to polar residues. The segment covering 72 to 83 (KTTEKVDSRQLK) has biased composition (basic and acidic residues). The segment covering 84–114 (DNTQTATADQPKVTMSDSATVKETSSNMQSP) has biased composition (polar residues). Residues 115–132 (QNATASQSTTQTSNVTTN) are compositionally biased toward low complexity. Residues 133 to 160 (DKSSTTYSNETDKSNLTQAKNVSTTPKT) show a composition bias toward polar residues. 2 consecutive CNA-B domains span residues 496–606 (KYNL…YKTP) and 607–717 (KYSL…EEET). The disordered stretch occupies residues 678–933 (TQTGTNTTED…NNSNNGTLFG (256 aa)). 2 stretches are compositionally biased toward acidic residues: residues 685–695 (TEDDKDADGGE) and 712–892 (YYEE…DSDS). An LPXTG sorting signal motif is present at residues 916–920 (LPETG). Over residues 918 to 933 (ETGSENNNSNNGTLFG) the composition is skewed to low complexity. Residue Thr-919 is modified to Pentaglycyl murein peptidoglycan amidated threonine. Residues 920–953 (GSENNNSNNGTLFGGLFAALGSLLLFGRRKKQNK) constitute a propeptide, removed by sortase.

Belongs to the serine-aspartate repeat-containing protein (SDr) family. As to quaternary structure, homodimerizes; via N2-Domain. Interacts with host NRXN1; this interaction mediates bacterial attachment to host cells.

Its subcellular location is the secreted. The protein localises to the cell wall. Its function is as follows. Cell surface-associated calcium-binding protein which plays an important role in adhesion and pathogenesis. Mediates interactions with components of the extracellular matrix such as host NRXN1 to promote bacterial adhesion. The chain is Serine-aspartate repeat-containing protein C (sdrC) from Staphylococcus aureus (strain Mu50 / ATCC 700699).